The chain runs to 173 residues: dCTP deaminase, dUMP-forming (173 aa).

Residues 93–98, D111, 119–121, and Q138 each bind dCTP; these read RSSIGR and TLE. E121 serves as the catalytic Proton donor/acceptor.

Belongs to the dCTP deaminase family. As to quaternary structure, homotrimer.

It carries out the reaction dCTP + 2 H2O = dUMP + NH4(+) + diphosphate. It functions in the pathway pyrimidine metabolism; dUMP biosynthesis; dUMP from dCTP: step 1/1. Functionally, bifunctional enzyme that catalyzes both the deamination of dCTP to dUTP and the hydrolysis of dUTP to dUMP without releasing the toxic dUTP intermediate. In Leptospira interrogans serogroup Icterohaemorrhagiae serovar copenhageni (strain Fiocruz L1-130), this protein is dCTP deaminase, dUMP-forming.